Reading from the N-terminus, the 183-residue chain is Adenine phosphoribosyltransferase (183 aa).

This sequence belongs to the purine/pyrimidine phosphoribosyltransferase family. In terms of assembly, homodimer.

It localises to the cytoplasm. It catalyses the reaction AMP + diphosphate = 5-phospho-alpha-D-ribose 1-diphosphate + adenine. It participates in purine metabolism; AMP biosynthesis via salvage pathway; AMP from adenine: step 1/1. Its function is as follows. Catalyzes a salvage reaction resulting in the formation of AMP, that is energically less costly than de novo synthesis. In Klebsiella pneumoniae subsp. pneumoniae (strain ATCC 700721 / MGH 78578), this protein is Adenine phosphoribosyltransferase.